A 683-amino-acid polypeptide reads, in one-letter code: MPEAQSRFRRRLLLYYGLFTLGLFGFVGMMGLLEKSNADALWLGYVFLFITIAIYACIGLICRTSDLNEYYVASRRVPALFNGMAIAADWMSAASFIGLAGILFASGYEGLAYVMGWTGGYCLVAFLLAPYLRKYGGYTIPDFLAARYGNGKPGGNLPVRAIAVLAASLCSFVYLVAQIQGVGLVVTRFIGVEFAVGIFFGLAGILVCSFLGGMRAVTWTQVAQYIMMIVAFLVTVSMIAWKHHHEALPQLSYGTLLSQLDAREQQLEREPAEQAVREYYRQQAILLQERIARLPDSFAQERDALDARLQDLRTRNAPLRDIKSLERERLEFPRDPAAAQQQWNQQRADALARSRHSLSSTEPYPAASEQERKTKRLNFVLLVFCLMVGTASLPHILTRLYTTPSVKETRNSVAWAVFFIALLYVSAPTLAALVKFEFFQHLVGTPYAELPQWVVQWRKVDPPVFGIRDVNGDGIVQWAEILLQPDMIVLAAPEIAGLPYVISGLIAAGALAAALSTADGLLLTIANALSHDVFYHMVDRQASHQRRVTTAKIVLLGVALFASYVTSLRPGNILFLVGAAFSLAASSFFPVLVLGIFWRRTTAAGAVAGMAAGLGVAVYYIIVNYPFFTRMTGIFGNRWFGVDPIASGAFGVPAGFAVAIIVSLLTPRNAPVIDRLVSYLRKG.

14 helical membrane passes run 12–32, 41–61, 84–104, 110–130, 162–182, 194–214, 221–241, 377–397, 413–433, 495–515, 548–568, 573–593, 603–623, and 645–665; these read LLLY…MMGL, LWLG…IGLI, MAIA…GILF, GLAY…LLAP, IAVL…IQGV, FAVG…LGGM, QVAQ…MIAW, LNFV…PHIL, VAWA…LAAL, IAGL…AAAL, VTTA…VTSL, ILFL…PVLV, AAGA…YIIV, and IASG…VSLL.

It belongs to the sodium:solute symporter (SSF) (TC 2.A.21) family.

Its subcellular location is the cell membrane. This is an uncharacterized protein from Cupriavidus necator (strain ATCC 17699 / DSM 428 / KCTC 22496 / NCIMB 10442 / H16 / Stanier 337) (Ralstonia eutropha).